Here is a 215-residue protein sequence, read N- to C-terminus: Sodium channel regulatory subunit beta-3 (215 aa).

The N-terminal stretch at 1-24 is a signal peptide; the sequence is MPAFNRLLPLASLVLIYWVRVCFP. In terms of domain architecture, Ig-like C2-type spans 25–138; the sequence is VCVEVPSETE…EAHRPFVKTT (114 aa). Topologically, residues 25 to 156 are extracellular; it reads VCVEVPSETE…EEAGEDFTSV (132 aa). Disulfide bonds link Cys-26/Cys-48 and Cys-45/Cys-120. 4 N-linked (GlcNAc...) asparagine glycosylation sites follow: Asn-95, Asn-109, Asn-113, and Asn-121. A helical transmembrane segment spans residues 157–178; it reads VSEIMMYILLVFLTLWLFIEMI. Over 179–215 the chain is Cytoplasmic; it reads YCYRKVSKAEEAAQENASDYLAIPSENKENSVVPVEE.

This sequence belongs to the sodium channel auxiliary subunit SCN3B (TC 8.A.17) family. In terms of assembly, a voltage-gated sodium (Nav) channel consists of an ion-conducting pore-forming alpha subunit functional on its own that is regulated by one or more beta subunits. Forms homodimers and homotrimers. SCN3B is non-covalently associated with alpha subunits and induces the formation of alpha subunit oligomers, including trimers. Interacts with SCN5A/Nav1.5; regulatory subunit of SCN5A/Nav1.5. Interacts with SCN7A/Nav2.1; probable regulatory subunit of SCN7A/Nav2.1. Interacts with SCN10A; regulatory subunit of SCN10A/Nav1.8. Interacts with NFASC; probably involved in targeting the sodium channels to the nodes of Ranvier. Intramolecular disulfide bonds favor the voltage-gated sodium channel oligomeric complex assembly. In terms of processing, N-glycosylated. In terms of tissue distribution, expressed broadly in neurons in the central and peripheral nervous systems, but not in glia and most non-neuronal cells. Weak detection in lung and adrenal gland.

Its subcellular location is the cell membrane. Regulatory subunit of multiple voltage-gated sodium (Nav) channels directly mediating the depolarization of excitable membranes. Navs, also called VGSCs (voltage-gated sodium channels) or VDSCs (voltage-dependent sodium channels), operate by switching between closed and open conformations depending on the voltage difference across the membrane. In the open conformation they allow Na(+) ions to selectively pass through the pore, along their electrochemical gradient. The influx of Na+ ions provokes membrane depolarization, initiating the propagation of electrical signals throughout cells and tissues. The accessory beta subunits participate in localization and functional modulation of the Nav channels. Voltage-gated sodium channels regulatory subunit that modulates channel gating kinetics. Modulates the activity of SCN2A/Nav1.2, causing a hyperpolarizing shift in the voltage-dependence of inactivation and increasing the fraction of channels operating in the fast gating mode. Also able to induce unique persistent SCN2A/Nav1.2-mediated sodium currents. Could modulate the activity of SCN10A/Nav1.8. This Rattus norvegicus (Rat) protein is Sodium channel regulatory subunit beta-3.